The primary structure comprises 343 residues: MKTVSIIGGTGYTGSELLRLLSNHDKVEVLNVTSRKEAGKKLTDFHPQVRNLRNYNDLEFQNIAPEDIDTDIVFCATPHGASMAIVPTLHEKGINIIDLSGDYRFEDIEMYESWYGLKHTGKIESAVYGLPELHREKIKKSKTIANPGCYPTGAILSMAPLVANDLVDERIIFDSKSGVSGAGVVASQTTHFPNVNENLGAYKITKHRHSPEIGKELEYLGNKRLKVSFTPHLLPVTRGILTTAHSYLKEDVSRVDVIEIYEEFYKDEFFVRIFEESMPSLTGVRGTNFCDIGGFEIDQHGRIVVVSAIDNLVKGASGQAIQNMNIIMGFDEKEGLSVGGMRP.

Cys149 is an active-site residue.

It belongs to the NAGSA dehydrogenase family. Type 1 subfamily.

It localises to the cytoplasm. The enzyme catalyses N-acetyl-L-glutamate 5-semialdehyde + phosphate + NADP(+) = N-acetyl-L-glutamyl 5-phosphate + NADPH + H(+). Its pathway is amino-acid biosynthesis; L-arginine biosynthesis; N(2)-acetyl-L-ornithine from L-glutamate: step 3/4. In terms of biological role, catalyzes the NADPH-dependent reduction of N-acetyl-5-glutamyl phosphate to yield N-acetyl-L-glutamate 5-semialdehyde. The sequence is that of N-acetyl-gamma-glutamyl-phosphate reductase from Methanococcus maripaludis (strain C5 / ATCC BAA-1333).